The following is a 183-amino-acid chain: Acireductone dioxygenase (183 aa).

Residues His95, His97, Glu101, and His139 each contribute to the Fe(2+) site. Ni(2+) contacts are provided by His95, His97, Glu101, and His139.

It belongs to the acireductone dioxygenase (ARD) family. Monomer. Fe(2+) serves as cofactor. The cofactor is Ni(2+).

The enzyme catalyses 1,2-dihydroxy-5-(methylsulfanyl)pent-1-en-3-one + O2 = 3-(methylsulfanyl)propanoate + CO + formate + 2 H(+). It catalyses the reaction 1,2-dihydroxy-5-(methylsulfanyl)pent-1-en-3-one + O2 = 4-methylsulfanyl-2-oxobutanoate + formate + 2 H(+). It functions in the pathway amino-acid biosynthesis; L-methionine biosynthesis via salvage pathway; L-methionine from S-methyl-5-thio-alpha-D-ribose 1-phosphate: step 5/6. In terms of biological role, catalyzes 2 different reactions between oxygen and the acireductone 1,2-dihydroxy-3-keto-5-methylthiopentene (DHK-MTPene) depending upon the metal bound in the active site. Fe-containing acireductone dioxygenase (Fe-ARD) produces formate and 2-keto-4-methylthiobutyrate (KMTB), the alpha-ketoacid precursor of methionine in the methionine recycle pathway. Ni-containing acireductone dioxygenase (Ni-ARD) produces methylthiopropionate, carbon monoxide and formate, and does not lie on the methionine recycle pathway. This chain is Acireductone dioxygenase, found in Hydrogenobaculum sp. (strain Y04AAS1).